We begin with the raw amino-acid sequence, 136 residues long: Large ribosomal subunit protein uL16 (136 aa).

This sequence belongs to the universal ribosomal protein uL16 family. Part of the 50S ribosomal subunit.

In terms of biological role, binds 23S rRNA and is also seen to make contacts with the A and possibly P site tRNAs. This Rickettsia massiliae (strain Mtu5) protein is Large ribosomal subunit protein uL16.